The primary structure comprises 312 residues: Acetyl-coenzyme A carboxylase carboxyl transferase subunit beta (312 aa).

Positions 24-293 (LWIKCPDSGQ…PHADEVAAPP (270 aa)) constitute a CoA carboxyltransferase N-terminal domain. A disordered region spans residues 286–312 (ADEVAAPPPPDVEGPPPAAEPVALPPA). Residues 291-312 (APPPPDVEGPPPAAEPVALPPA) are compositionally biased toward pro residues.

The protein belongs to the AccD/PCCB family. Acetyl-CoA carboxylase is a heterohexamer composed of biotin carboxyl carrier protein (AccB), biotin carboxylase (AccC) and two subunits each of ACCase subunit alpha (AccA) and ACCase subunit beta (AccD).

The protein resides in the cytoplasm. The catalysed reaction is N(6)-carboxybiotinyl-L-lysyl-[protein] + acetyl-CoA = N(6)-biotinyl-L-lysyl-[protein] + malonyl-CoA. It participates in lipid metabolism; malonyl-CoA biosynthesis; malonyl-CoA from acetyl-CoA: step 1/1. Its function is as follows. Component of the acetyl coenzyme A carboxylase (ACC) complex. Biotin carboxylase (BC) catalyzes the carboxylation of biotin on its carrier protein (BCCP) and then the CO(2) group is transferred by the transcarboxylase to acetyl-CoA to form malonyl-CoA. This Afipia carboxidovorans (strain ATCC 49405 / DSM 1227 / KCTC 32145 / OM5) (Oligotropha carboxidovorans) protein is Acetyl-coenzyme A carboxylase carboxyl transferase subunit beta.